Reading from the N-terminus, the 247-residue chain is 3-oxoacyl-[acyl-carrier-protein] reductase (247 aa).

An NADP(+)-binding site is contributed by 11–35 (VTGASRGIGKATALALAATGMKVVV). Ser143 is a binding site for substrate. Residue Tyr156 is the Proton acceptor of the active site.

This sequence belongs to the short-chain dehydrogenases/reductases (SDR) family.

It catalyses the reaction a (3R)-hydroxyacyl-[ACP] + NADP(+) = a 3-oxoacyl-[ACP] + NADPH + H(+). Its pathway is lipid metabolism; fatty acid biosynthesis. Functionally, catalyzes the NADPH-dependent reduction of beta-ketoacyl-ACP substrates to beta-hydroxyacyl-ACP products, the first reductive step in the elongation cycle of fatty acid biosynthesis. Is capable of reducing acetoacetyl-CoA, but less well than its paralog PhaB. The protein is 3-oxoacyl-[acyl-carrier-protein] reductase (fabG) of Synechocystis sp. (strain ATCC 27184 / PCC 6803 / Kazusa).